The following is a 667-amino-acid chain: Cysteine-rich receptor-like protein kinase 11 (667 aa).

An N-terminal signal peptide occupies residues 1-24; sequence MKQRSLFSVLCFFFISFGVASVSA. Gnk2-homologous domains lie at 25 to 129 and 135 to 248; these read QTCT…NTSF and LNPR…LYTY. The Extracellular segment spans residues 25–292; sequence QTCTTDKGTF…SKGISAGVVV (268 aa). Residues asparagine 37, asparagine 54, asparagine 64, asparagine 106, asparagine 126, asparagine 150, and asparagine 254 are each glycosylated (N-linked (GlcNAc...) asparagine). Over residues 259-268 the composition is skewed to pro residues; it reads SPPPEPPVTV. Residues 259–282 form a disordered region; that stretch reads SPPPEPPVTVPQPAGDQDNPTNND. A glycan (N-linked (GlcNAc...) asparagine) is linked at asparagine 281. The chain crosses the membrane as a helical span at residues 293 to 313; that stretch reads AITVPTVIAILILLVLGFVLF. Topologically, residues 314-667 are cytoplasmic; that stretch reads RRRKSYQRTK…YTSKSSSFSS (354 aa). A Protein kinase domain is found at 350-629; sequence FSTSNKLGEG…IILMLTSNTI (280 aa). Residues 356 to 364 and lysine 378 each bind ATP; that span reads LGEGGFGAV. The residue at position 423 (tyrosine 423) is a Phosphotyrosine. Aspartate 475 (proton acceptor) is an active-site residue. Serine 479 bears the Phosphoserine mark. A Phosphothreonine modification is found at threonine 515. Tyrosine 523 is modified (phosphotyrosine).

This sequence belongs to the protein kinase superfamily. Ser/Thr protein kinase family. CRK subfamily. Detected in root, stem, leaf and flower.

It localises to the membrane. The enzyme catalyses L-seryl-[protein] + ATP = O-phospho-L-seryl-[protein] + ADP + H(+). The catalysed reaction is L-threonyl-[protein] + ATP = O-phospho-L-threonyl-[protein] + ADP + H(+). In Arabidopsis thaliana (Mouse-ear cress), this protein is Cysteine-rich receptor-like protein kinase 11 (CRK11).